We begin with the raw amino-acid sequence, 2261 residues long: Phospholipid-transporting ATPase ABCA1 (2261 aa).

Residue Cys-3 is the site of S-palmitoyl cysteine attachment. A glycan (N-linked (GlcNAc...) asparagine) is linked at Asn-14. A helical membrane pass occupies residues Thr-22–Val-42. A lipid anchor (S-palmitoyl cysteine) is attached at Cys-23. Over Arg-43–Ser-639 the chain is Extracellular. The tract at residues Trp-69–Pro-80 is annulus domain 1. Cys-75 and Cys-309 are joined by a disulfide. N-linked (GlcNAc...) asparagine glycans are attached at residues Asn-98, Asn-151, Asn-161, Asn-196, Asn-244, Asn-292, Asn-337, and Asn-349. The segment at Ser-368 to Leu-379 is annulus domain 2. Asn-400, Asn-478, Asn-489, and Asn-521 each carry an N-linked (GlcNAc...) asparagine glycan. Residues Glu-564–Ala-594 are gateway domain. The next 5 membrane-spanning stretches (helical) occupy residues Met-640–Val-660, Phe-683–Ile-703, Ser-716–Ile-736, Leu-745–Val-765, and Ile-777–Phe-797. Asn-820 is a glycosylation site (N-linked (GlcNAc...) asparagine). The chain crosses the membrane as a helical span at residues Met-827 to Pro-847. One can recognise an ABC transporter 1 domain in the interval Val-899–Val-1131. ATP is bound at residue Gly-933 to Thr-940. A helical membrane pass occupies residues Thr-941–Gly-961. Phosphoserine; by PKA is present on Ser-1042. 2 S-palmitoyl cysteine lipidation sites follow: Cys-1110 and Cys-1111. 2 N-linked (GlcNAc...) asparagine glycosylation sites follow: Asn-1144 and Asn-1294. A disordered region spans residues Phe-1285–Gly-1310. Residues Glu-1287 to Asp-1299 show a composition bias toward acidic residues. Ser-1296 carries the phosphoserine modification. A helical membrane pass occupies residues Ile-1351 to Phe-1371. Residues Gly-1372 to Leu-1656 lie on the Extracellular side of the membrane. Asn-1453 carries an N-linked (GlcNAc...) asparagine glycan. A disulfide bridge links Cys-1463 with Cys-1477. N-linked (GlcNAc...) asparagine glycans are attached at residues Asn-1499, Asn-1504, and Asn-1637. The next 6 membrane-spanning stretches (helical) occupy residues Val-1657 to Ile-1677, Phe-1703 to Cys-1723, Leu-1735 to Pro-1755, Val-1768 to Leu-1788, Ile-1802 to Met-1822, and Asn-1852 to Tyr-1872. Residues Leu-1912 to Arg-2144 form the ABC transporter 2 domain. Gly-1946–Ser-1953 is an ATP binding site. Asn-2044 carries N-linked (GlcNAc...) asparagine glycosylation. Ser-2054 carries the phosphoserine; by PKA modification. An N-linked (GlcNAc...) asparagine glycan is attached at Asn-2238.

This sequence belongs to the ABC transporter superfamily. ABCA family. Interacts with MEGF10. May interact with APOE1; functionally associated with APOE1 in the biogenesis of HDLs. Interacts with ABCA8; this interaction potentiates cholesterol efflux. Interacts with ABCA12 and NR1H2; this interaction is required for ABCA1 localization to the cell surface and is necessary for its normal activity and stability. Post-translationally, phosphorylation on Ser-2054 regulates phospholipid efflux. In terms of processing, palmitoylated by ZDHHC8. Palmitoylation is essential for localization to the plasma membrane. In terms of tissue distribution, widely expressed in adult tissues. Highest levels are found in pregnant uterus and uterus.

It is found in the cell membrane. The protein resides in the endosome. The enzyme catalyses ATP + H2O + phospholipidSide 1 = ADP + phosphate + phospholipidSide 2.. The catalysed reaction is a 1,2-diacyl-sn-glycero-3-phosphocholine(out) + ATP + H2O = a 1,2-diacyl-sn-glycero-3-phosphocholine(in) + ADP + phosphate + H(+). It carries out the reaction a 1,2-diacyl-sn-glycero-3-phospho-L-serine(out) + ATP + H2O = a 1,2-diacyl-sn-glycero-3-phospho-L-serine(in) + ADP + phosphate + H(+). It catalyses the reaction a sphingomyelin(in) + ATP + H2O = a sphingomyelin(out) + ADP + phosphate + H(+). The enzyme catalyses cholesterol(in) + ATP + H2O = cholesterol(out) + ADP + phosphate + H(+). With respect to regulation, ATPase activity is decreased by cholesterol and ceramide. ATPase activity is stimulated by phosphatidylcholine and to a lesser degree by phosphatidylserine and sphingomyelin. Phospholipid translocase activity is highly reduced by berylium fluoride and aluminum flouride and reduced by N-ethylmaleimide. Its function is as follows. Catalyzes the translocation of specific phospholipids from the cytoplasmic to the extracellular/lumenal leaflet of membrane coupled to the hydrolysis of ATP. Thereby, participates in phospholipid transfer to apolipoproteins to form nascent high density lipoproteins/HDLs. Transports preferentially phosphatidylcholine over phosphatidylserine. May play a similar role in the efflux of intracellular cholesterol to apolipoproteins and the formation of nascent high density lipoproteins/HDLs. Translocates phospholipids from the outer face of the plasma membrane and forces it through its gateway and annulus into an elongated hydrophobic tunnel in its extracellular domain. This is Phospholipid-transporting ATPase ABCA1 from Mus musculus (Mouse).